The sequence spans 521 residues: Cysteine protease atg-4.2 (521 aa).

The segment covering 90–100 has biased composition (low complexity); that stretch reads MMGSIRPSSSS. The segment at 90 to 109 is disordered; it reads MMGSIRPSSSSQDVHSTGEI. The Nucleophile role is filled by cysteine 203. Catalysis depends on residues aspartate 394 and histidine 396. Residues 499 to 521 form a disordered region; the sequence is PSYEREVSETEQAQADKHGFEML.

Belongs to the peptidase C54 family.

The protein localises to the cytoplasm. It catalyses the reaction [protein]-C-terminal L-amino acid-glycyl-phosphatidylethanolamide + H2O = [protein]-C-terminal L-amino acid-glycine + a 1,2-diacyl-sn-glycero-3-phosphoethanolamine. Functionally, cysteine protease required for autophagy. Cleaves the C-terminal amino acid of ATG8 family proteins lgg-1, to reveal a C-terminal glycine. Exposure of the glycine at the C-terminus is essential for ATG8 proteins conjugation to phosphatidylethanolamine (PE) and insertion to membranes, which is necessary for autophagy. Its cleavage activity is functionally redundant to atg-4.1, but it cleaves lgg-1 precursors less efficiently than atg-4.1. In contrast to atg-4.1, plays a more significant role in the later phases of autophagy and in addition has a role in autophagosome maturation. Acts redundantly with atg-4.1 to promote the lgg-1 delipidation to release the protein from membranes, which facilitates multiple events during macroautophagy. Regulates the accumulation of autophagic structures in neurons and is specifically, required for the maturation and elimination of autophagosomes from the synaptic region of AIY interneurons. In Caenorhabditis elegans, this protein is Cysteine protease atg-4.2.